The following is a 233-amino-acid chain: Putative N-acetylmannosamine-6-phosphate 2-epimerase (233 aa).

This sequence belongs to the NanE family.

The catalysed reaction is an N-acyl-D-glucosamine 6-phosphate = an N-acyl-D-mannosamine 6-phosphate. It functions in the pathway amino-sugar metabolism; N-acetylneuraminate degradation; D-fructose 6-phosphate from N-acetylneuraminate: step 3/5. In terms of biological role, converts N-acetylmannosamine-6-phosphate (ManNAc-6-P) to N-acetylglucosamine-6-phosphate (GlcNAc-6-P). This Yersinia pestis bv. Antiqua (strain Antiqua) protein is Putative N-acetylmannosamine-6-phosphate 2-epimerase.